We begin with the raw amino-acid sequence, 494 residues long: UDP-N-acetylmuramoyl-L-alanyl-D-glutamate--2,6-diaminopimelate ligase (494 aa).

Position 30 (Ser30) interacts with UDP-N-acetyl-alpha-D-muramoyl-L-alanyl-D-glutamate. 110-116 lines the ATP pocket; the sequence is GTNGKTS. UDP-N-acetyl-alpha-D-muramoyl-L-alanyl-D-glutamate is bound by residues 152 to 153, Ser179, and Arg187; that span reads TT. Position 219 is an N6-carboxylysine (Lys219). Meso-2,6-diaminopimelate-binding positions include Arg380, 404–407, Gly456, and Glu460; that span reads DNPR. The Meso-diaminopimelate recognition motif signature appears at 404-407; sequence DNPR.

Belongs to the MurCDEF family. MurE subfamily. Mg(2+) is required as a cofactor. In terms of processing, carboxylation is probably crucial for Mg(2+) binding and, consequently, for the gamma-phosphate positioning of ATP.

The protein localises to the cytoplasm. The enzyme catalyses UDP-N-acetyl-alpha-D-muramoyl-L-alanyl-D-glutamate + meso-2,6-diaminopimelate + ATP = UDP-N-acetyl-alpha-D-muramoyl-L-alanyl-gamma-D-glutamyl-meso-2,6-diaminopimelate + ADP + phosphate + H(+). Its pathway is cell wall biogenesis; peptidoglycan biosynthesis. In terms of biological role, catalyzes the addition of meso-diaminopimelic acid to the nucleotide precursor UDP-N-acetylmuramoyl-L-alanyl-D-glutamate (UMAG) in the biosynthesis of bacterial cell-wall peptidoglycan. In Alkaliphilus metalliredigens (strain QYMF), this protein is UDP-N-acetylmuramoyl-L-alanyl-D-glutamate--2,6-diaminopimelate ligase.